The sequence spans 29 residues: Glucagon (29 aa).

Belongs to the glucagon family.

The protein resides in the secreted. Glucagon plays a key role in glucose metabolism and homeostasis. Regulates blood glucose by increasing gluconeogenesis and decreasing glycolysis. This is Glucagon (gcg) from Polypterus senegalus (Senegal bichir).